The following is a 217-amino-acid chain: L-lactate dehydrogenase B chain (217 aa).

N22 contacts NAD(+). Positions 22 and 53 each coordinate substrate. Catalysis depends on H77, which acts as the Proton acceptor. Y123 carries the phosphotyrosine modification. Position 132 (T132) interacts with substrate. Position 212 is an N6-acetyllysine (K212).

It belongs to the LDH/MDH superfamily. LDH family. As to quaternary structure, homotetramer. Interacts with PTEN upstream reading frame protein MP31; the interaction leads to inhibition of mitochondrial lactate dehydrogenase activity, preventing conversion of lactate to pyruvate in mitochondria.

The protein resides in the cytoplasm. Its subcellular location is the mitochondrion inner membrane. It carries out the reaction (S)-lactate + NAD(+) = pyruvate + NADH + H(+). It functions in the pathway fermentation; pyruvate fermentation to lactate; (S)-lactate from pyruvate: step 1/1. Its function is as follows. Interconverts simultaneously and stereospecifically pyruvate and lactate with concomitant interconversion of NADH and NAD(+). This is L-lactate dehydrogenase B chain (LDHB) from Oryctolagus cuniculus (Rabbit).